Consider the following 543-residue polypeptide: Chaperonin GroEL (543 aa).

ATP is bound by residues Thr-29–Pro-32, Asp-86–Thr-90, Gly-413, Asn-478–Ala-480, and Asp-494.

The protein belongs to the chaperonin (HSP60) family. In terms of assembly, forms a cylinder of 14 subunits composed of two heptameric rings stacked back-to-back. Interacts with the co-chaperonin GroES.

It localises to the cytoplasm. It catalyses the reaction ATP + H2O + a folded polypeptide = ADP + phosphate + an unfolded polypeptide.. Its function is as follows. Together with its co-chaperonin GroES, plays an essential role in assisting protein folding. The GroEL-GroES system forms a nano-cage that allows encapsulation of the non-native substrate proteins and provides a physical environment optimized to promote and accelerate protein folding. This Lactobacillus johnsonii (strain CNCM I-12250 / La1 / NCC 533) protein is Chaperonin GroEL.